The primary structure comprises 120 residues: NAD(P)H-quinone oxidoreductase subunit 3, chloroplastic (120 aa).

3 helical membrane-spanning segments follow: residues 9–29 (IFWAFLIISSLIPILAFLISG), 64–84 (MFALVFVVFDVETVFLYPWAM), and 88–108 (VLGVSVFIEALIFVLILIVGL).

It belongs to the complex I subunit 3 family. As to quaternary structure, NDH is composed of at least 16 different subunits, 5 of which are encoded in the nucleus.

The protein resides in the plastid. The protein localises to the chloroplast thylakoid membrane. The enzyme catalyses a plastoquinone + NADH + (n+1) H(+)(in) = a plastoquinol + NAD(+) + n H(+)(out). It carries out the reaction a plastoquinone + NADPH + (n+1) H(+)(in) = a plastoquinol + NADP(+) + n H(+)(out). NDH shuttles electrons from NAD(P)H:plastoquinone, via FMN and iron-sulfur (Fe-S) centers, to quinones in the photosynthetic chain and possibly in a chloroplast respiratory chain. The immediate electron acceptor for the enzyme in this species is believed to be plastoquinone. Couples the redox reaction to proton translocation, and thus conserves the redox energy in a proton gradient. The protein is NAD(P)H-quinone oxidoreductase subunit 3, chloroplastic of Lupinus luteus (European yellow lupine).